A 147-amino-acid polypeptide reads, in one-letter code: Hemoglobin subunit beta (147 aa).

An N-acetylvaline modification is found at Val2. One can recognise a Globin domain in the interval 3 to 147; the sequence is HLTGEEKAAV…VANALAHKYH (145 aa). Thr13 is subject to Phosphothreonine. The residue at position 45 (Ser45) is a Phosphoserine. Lys60 is modified (N6-acetyllysine). His64 lines the heme b pocket. Lys83 is modified (N6-acetyllysine). His93 provides a ligand contact to heme b. At Cys94 the chain carries S-nitrosocysteine. Lys145 carries the N6-acetyllysine modification.

It belongs to the globin family. Heterotetramer of two alpha chains and two beta chains. Red blood cells.

Its function is as follows. Involved in oxygen transport from the lung to the various peripheral tissues. This is Hemoglobin subunit beta (HBB) from Aotus azarae (Azara's night monkey).